Reading from the N-terminus, the 335-residue chain is MKQIAATSGPTNIGLLSVGSYRPQRVVTNDELCQNIDSSDEWIYSRTGIKTRRFAARDESTASMATEAGREAIAKAGLEASDIDCVVVATSTHFLQTPACGPAVAAALGATGVPAFDISAGCAGFGYALGVAADMVRGGTAGKVLVLGSEKLSPTVDMTDRSNCFIFADGAAGVVVGETPTQGIGPTVWGSDGTQATAIRQDIDWMDYLDRPTGPRPFLRLEGSAVFRWAAFEMGKVGQQAMDAAGVRPDEIDVFLPHQANSRINEILAKSLELRPDAVIANDIEHTGNTSAASIPLAMAEVLATGAAKAGDLALLIGYGAGLSYTAQVVRLPPG.

Residues C122 and H258 contribute to the active site. Residues 259 to 263 (QANSR) form an ACP-binding region. The active site involves N289.

It belongs to the thiolase-like superfamily. FabH family. Homodimer.

It localises to the cytoplasm. It catalyses the reaction malonyl-[ACP] + dodecanoyl-CoA + H(+) = 3-oxotetradecanoyl-[ACP] + CO2 + CoA. It functions in the pathway lipid metabolism; fatty acid biosynthesis. Its pathway is lipid metabolism; mycolic acid biosynthesis. In terms of biological role, catalyzes the condensation reaction of fatty acid synthesis by the addition to an acyl acceptor of two carbons from malonyl-ACP. Catalyzes the first condensation reaction which initiates fatty acid synthesis and may therefore play a role in governing the total rate of fatty acid production. Possesses both acetoacetyl-ACP synthase and acetyl transacylase activities. Its substrate specificity determines the biosynthesis of branched-chain and/or straight-chain of fatty acids. The sequence is that of Mycobacterial beta-ketoacyl-[acyl-carrier-protein] synthase III from Mycolicibacterium paratuberculosis (strain ATCC BAA-968 / K-10) (Mycobacterium paratuberculosis).